We begin with the raw amino-acid sequence, 313 residues long: Tetraspanning orphan receptor (313 aa).

The Extracellular segment spans residues 1–54 (PQCESETNFHYDIPPGYKDDVLVDVNNMSPSLVSDTQKHERGSHEVKIKHFSPY). A helical membrane pass occupies residues 55 to 75 (IAVCVTTFSLAFCCFMVHAAI). Residues 76 to 82 (TRQPTHL) are Cytoplasmic-facing. The chain crosses the membrane as a helical span at residues 83–103 (LPFFFIQVFDLIICLIHILGF). Residues 104–129 (MSSTSDIRLVIHTKTGPIYIKSTGLT) lie on the Extracellular side of the membrane. The chain crosses the membrane as a helical span at residues 130–150 (FIILSISCMMLAFKAYCLGMV). The Cytoplasmic portion of the chain corresponds to 151–313 (WDCYKYLMLN…NASSNAHSSC (163 aa)). Disordered regions lie at residues 192-218 (NNSI…YDPA) and 279-313 (NTNT…HSSC). A compositionally biased stretch (low complexity) spans 279-295 (NTNTSTTTSVISPLTTT). Over residues 301 to 313 (QINNASSNAHSSC) the composition is skewed to polar residues.

As to quaternary structure, interacts (via N-terminal extracellular domain) with human C2a. In terms of processing, phosphorylated on tyrosine residues.

The protein resides in the cell membrane. In terms of biological role, cell surface receptor that binds to human complement C2a protein. This results in inhibition of the classical and lectin pathways of complement activation, probably due to interference with binding of C2a to C4b and interference with cleavage by C1 or MASP2 such that C3 convertase cannot be formed. This infers resistance to complement-mediated cell lysis, allowing parasite survival and infection. This is Tetraspanning orphan receptor from Schistosoma haematobium (Blood fluke).